The chain runs to 369 residues: CLIP domain-containing serine protease HP8 (369 aa).

Residues 1–24 form the signal peptide; sequence MKTPFEKIRIISCILVIVSTNVVG. A propeptide spanning residues 25–81 is cleaved from the precursor; sequence QKCNGGANCIPLEECTDLFQQLKQGNSPQLTRLLRGLHCGFEDLNSPKICCPPEFLA. A Clip domain is found at 26–75; sequence KCNGGANCIPLEECTDLFQQLKQGNSPQLTRLLRGLHCGFEDLNSPKICC. Disulfide bonds link C27–C74, C33–C63, C39–C75, C105–C239, C142–C158, C186–C191, C286–C303, and C313–C344. Residues 113-368 form the Peptidase S1 domain; that stretch reads IFGGIQTEID…FMDWILSKLE (256 aa). Residue H157 is the Charge relay system of the active site. E177, N179, T182, and D185 together coordinate Ca(2+). A glycan (N-linked (GlcNAc...) asparagine) is linked at N179. Residue D219 is the Charge relay system of the active site. Residue S317 is the Charge relay system of the active site.

It belongs to the peptidase S1 family. CLIP subfamily. As to quaternary structure, in the active form, heterodimer of a light chain and a heavy chain; disulfide-linked. Post-translationally, proteolytically cleaved for activation. Cleavage produces a light chain and a catalytic heavy chain which remains covalently associated probably through an interchain disulfide bond. In terms of tissue distribution, in larvae, expressed in the fat body and hemocytes.

The protein resides in the secreted. The protein localises to the cytoplasm. With respect to regulation, inhibited by (p-amidinophenyl) methanesulfonyl fluoride, p-nitrophenyl-p'-guanidinobenzoate, D-phenylalanyl-L-prolyl-L-arginyl chloromethane, leupeptin, antipain and to a lesser extent by antithrombin III. In terms of biological role, endopeptidase with selective post-Arg cleavage site. Functions in the innate immune response to fungal and Gram-positive bacterial infections. Upon pathogen infection promotes nodulation; a cellular defense response in which hemocytes surround and isolate invading pathogens forming aggregates called nodules. Involved in activating nodule formation in response to infection with M.luteus, E.coli or S.cerevisiae. Able to bind the microbes M.luteus, E.coli or S.cerevisiae. According to another report, does not bind microorganisms. This Bombyx mori (Silk moth) protein is CLIP domain-containing serine protease HP8.